The following is a 235-amino-acid chain: Proteasome subunit alpha (235 aa).

It belongs to the peptidase T1A family. In terms of assembly, the 20S proteasome core is composed of 14 alpha and 14 beta subunits that assemble into four stacked heptameric rings, resulting in a barrel-shaped structure. The two inner rings, each composed of seven catalytic beta subunits, are sandwiched by two outer rings, each composed of seven alpha subunits. The catalytic chamber with the active sites is on the inside of the barrel. Has a gated structure, the ends of the cylinder being occluded by the N-termini of the alpha-subunits. Is capped by the proteasome-associated ATPase, ARC.

The protein localises to the cytoplasm. Its pathway is protein degradation; proteasomal Pup-dependent pathway. Its activity is regulated as follows. The formation of the proteasomal ATPase ARC-20S proteasome complex, likely via the docking of the C-termini of ARC into the intersubunit pockets in the alpha-rings, may trigger opening of the gate for substrate entry. Interconversion between the open-gate and close-gate conformations leads to a dynamic regulation of the 20S proteasome proteolysis activity. In terms of biological role, component of the proteasome core, a large protease complex with broad specificity involved in protein degradation. The polypeptide is Proteasome subunit alpha (Arthrobacter sp. (strain FB24)).